Reading from the N-terminus, the 227-residue chain is Probable GTP-binding protein EngB (227 aa).

One can recognise an EngB-type G domain in the interval 13-188 (IGLEVAFAGR…AGVMGNWYEY (176 aa)). Residues 21–28 (GRSNAGKS), 48–52 (GRTQM), 67–70 (DLPG), 134–137 (TKAD), and 167–169 (FSA) contribute to the GTP site. Positions 28 and 50 each coordinate Mg(2+).

The protein belongs to the TRAFAC class TrmE-Era-EngA-EngB-Septin-like GTPase superfamily. EngB GTPase family. It depends on Mg(2+) as a cofactor.

In terms of biological role, necessary for normal cell division and for the maintenance of normal septation. This chain is Probable GTP-binding protein EngB, found in Psychrobacter cryohalolentis (strain ATCC BAA-1226 / DSM 17306 / VKM B-2378 / K5).